A 175-amino-acid polypeptide reads, in one-letter code: Peptide deformylase 1 (175 aa).

Fe cation contacts are provided by Cys-99 and His-141. Residue Glu-142 is part of the active site. His-145 lines the Fe cation pocket.

The protein belongs to the polypeptide deformylase family. Fe(2+) serves as cofactor.

The catalysed reaction is N-terminal N-formyl-L-methionyl-[peptide] + H2O = N-terminal L-methionyl-[peptide] + formate. Its function is as follows. Removes the formyl group from the N-terminal Met of newly synthesized proteins. Requires at least a dipeptide for an efficient rate of reaction. N-terminal L-methionine is a prerequisite for activity but the enzyme has broad specificity at other positions. This Rickettsia conorii (strain ATCC VR-613 / Malish 7) protein is Peptide deformylase 1.